The primary structure comprises 186 residues: Ribosome-recycling factor (186 aa).

Belongs to the RRF family.

It localises to the cytoplasm. In terms of biological role, responsible for the release of ribosomes from messenger RNA at the termination of protein biosynthesis. May increase the efficiency of translation by recycling ribosomes from one round of translation to another. This Rickettsia felis (strain ATCC VR-1525 / URRWXCal2) (Rickettsia azadi) protein is Ribosome-recycling factor.